The primary structure comprises 199 residues: NAD(P)H dehydrogenase (quinone) (199 aa).

The Flavodoxin-like domain occupies 4 to 190; it reads VLVLYYSAYG…NGARYQGRTI (187 aa). Residues 10-15 and 78-80 each bind FMN; these read SAYGHI and TRF. Tyr-12 contacts NAD(+). Substrate is bound at residue Trp-98. FMN-binding positions include 113–119 and His-134; that span reads STATQHG.

It belongs to the WrbA family. Requires FMN as cofactor.

The catalysed reaction is a quinone + NADH + H(+) = a quinol + NAD(+). It carries out the reaction a quinone + NADPH + H(+) = a quinol + NADP(+). The protein is NAD(P)H dehydrogenase (quinone) of Afipia carboxidovorans (strain ATCC 49405 / DSM 1227 / KCTC 32145 / OM5) (Oligotropha carboxidovorans).